Reading from the N-terminus, the 1225-residue chain is uncharacterized protein (1225 aa).

A compositionally biased stretch (polar residues) spans 1-15; sequence MSSQAEPSKGASNAD. The segment at 1-104 is disordered; it reads MSSQAEPSKG…VDGVPTRPVS (104 aa). The span at 16–25 shows a compositional bias: basic and acidic residues; the sequence is PNEKVEKMHL. A compositionally biased stretch (polar residues) spans 43–65; sequence ASPSDKNNLNPQSAGVSEVQVQD. Residues 167 to 187 traverse the membrane as a helical segment; sequence FLFGYLRFGFLSLFIIMAVCI. Positions 217–422 constitute an SMP-LTD domain; that stretch reads DSETVTWLNT…SPNVYELDIE (206 aa). C2 domains follow at residues 413–534, 559–668, and 685–803; these read SPNV…NDAF, DSGE…LLWF, and KPAQ…GALM. Phosphoserine is present on Ser843. The tract at residues 867-890 is disordered; it reads PESQKTPTAVDNTSTSRGSTSVKT. Residues 869–890 are compositionally biased toward polar residues; the sequence is SQKTPTAVDNTSTSRGSTSVKT. The C2 4 domain occupies 1019-1137; that stretch reads RLTPVPVKLE…QQQQQTNYEI (119 aa). Ca(2+)-binding residues include Asp1053, Asp1059, Asp1107, Asp1109, and Asp1115.

It depends on Ca(2+) as a cofactor.

It localises to the endoplasmic reticulum membrane. This is an uncharacterized protein from Schizosaccharomyces pombe (strain 972 / ATCC 24843) (Fission yeast).